Consider the following 244-residue polypeptide: rRNA adenine N-6-methyltransferase (244 aa).

Residues asparagine 11, isoleucine 13, glycine 38, glutamate 59, aspartate 84, and asparagine 101 each coordinate S-adenosyl-L-methionine.

This sequence belongs to the class I-like SAM-binding methyltransferase superfamily. rRNA adenine N(6)-methyltransferase family.

It catalyses the reaction adenosine(2085) in 23S rRNA + 2 S-adenosyl-L-methionine = N(6)-dimethyladenosine(2085) in 23S rRNA + 2 S-adenosyl-L-homocysteine + 2 H(+). In terms of biological role, this protein produces a dimethylation of the adenine residue at position 2085 in 23S rRNA, resulting in reduced affinity between ribosomes and macrolide-lincosamide-streptogramin B antibiotics. This is rRNA adenine N-6-methyltransferase (ermC') from Bacillus subtilis.